We begin with the raw amino-acid sequence, 116 residues long: Large ribosomal subunit protein bL19 (116 aa).

This sequence belongs to the bacterial ribosomal protein bL19 family.

Functionally, this protein is located at the 30S-50S ribosomal subunit interface and may play a role in the structure and function of the aminoacyl-tRNA binding site. The chain is Large ribosomal subunit protein bL19 from Clostridium novyi (strain NT).